Here is a 147-residue protein sequence, read N- to C-terminus: Small ribosomal subunit protein bS6 (147 aa).

Basic and acidic residues predominate over residues 97–141; the sequence is EEGPSAMMRKADRDRERDDRGGGFRGDREGGFRGDRGPRRPREEA. Positions 97–147 are disordered; the sequence is EEGPSAMMRKADRDRERDDRGGGFRGDREGGFRGDRGPRRPREEAPAVVEE.

This sequence belongs to the bacterial ribosomal protein bS6 family.

In terms of biological role, binds together with bS18 to 16S ribosomal RNA. This is Small ribosomal subunit protein bS6 from Nitrobacter hamburgensis (strain DSM 10229 / NCIMB 13809 / X14).